A 316-amino-acid polypeptide reads, in one-letter code: N-acetylmuramic acid 6-phosphate etherase (316 aa).

The interval 1 to 25 (MAVFDPDLQPSSDRGHLLTEQSNQR) is disordered. In terms of domain architecture, SIS spans 66–229 (VANRLRAGGR…STAVMVKLGK (164 aa)). Residue E94 is the Proton donor of the active site. E125 is an active-site residue.

The protein belongs to the GCKR-like family. MurNAc-6-P etherase subfamily. Homodimer.

The enzyme catalyses N-acetyl-D-muramate 6-phosphate + H2O = N-acetyl-D-glucosamine 6-phosphate + (R)-lactate. The protein operates within amino-sugar metabolism; N-acetylmuramate degradation. Functionally, specifically catalyzes the cleavage of the D-lactyl ether substituent of MurNAc 6-phosphate, producing GlcNAc 6-phosphate and D-lactate. This Synechococcus sp. (strain CC9605) protein is N-acetylmuramic acid 6-phosphate etherase.